The following is a 265-amino-acid chain: Phosphonates import ATP-binding protein PhnC 1 (265 aa).

In terms of domain architecture, ABC transporter spans 7–252 (IEVSNLSKSF…KLNEIYGTAA (246 aa)). An ATP-binding site is contributed by 39-46 (GASGSGKS).

It belongs to the ABC transporter superfamily. Phosphonates importer (TC 3.A.1.9.1) family. The complex is composed of two ATP-binding proteins (PhnC), two transmembrane proteins (PhnE) and a solute-binding protein (PhnD).

It localises to the cell inner membrane. It carries out the reaction phosphonate(out) + ATP + H2O = phosphonate(in) + ADP + phosphate + H(+). Part of the ABC transporter complex PhnCDE involved in phosphonates import. Responsible for energy coupling to the transport system. The protein is Phosphonates import ATP-binding protein PhnC 1 of Nostoc sp. (strain PCC 7120 / SAG 25.82 / UTEX 2576).